The primary structure comprises 144 residues: Pleckstrin homology-like domain family A member 2 (144 aa).

The PH domain maps to 18 to 111; that stretch reads ILCEGELEKR…AAITMALIDF (94 aa). Phosphoserine is present on Ser-140.

Belongs to the PHLDA2 family. In terms of tissue distribution, specifically expressed at high levels in extraembryonic tissues in the developing conceptus (at protein level). Expressed in placenta and yolc sac. Expressed at low levels in fetal liver and kidney.

Its subcellular location is the cytoplasm. It localises to the membrane. Functionally, plays a role in regulating placenta growth. May act via its PH domain that competes with other PH domain-containing proteins, thereby preventing their binding to membrane lipids. In Mus musculus (Mouse), this protein is Pleckstrin homology-like domain family A member 2 (Phlda2).